A 463-amino-acid polypeptide reads, in one-letter code: GTPase Der (463 aa).

EngA-type G domains follow at residues 3–166 (PVVA…PESG) and 177–350 (IRIA…QSAM). GTP is bound by residues 9-16 (GRTNVGKS), 56-60 (DTGGI), 118-121 (NKID), 183-190 (GRPNVGKS), 230-234 (DTAGI), and 295-298 (NKWD). The KH-like domain maps to 351-435 (LDLSASRLTQ…PLKLVFKSAE (85 aa)).

It belongs to the TRAFAC class TrmE-Era-EngA-EngB-Septin-like GTPase superfamily. EngA (Der) GTPase family. In terms of assembly, associates with the 50S ribosomal subunit.

Functionally, GTPase that plays an essential role in the late steps of ribosome biogenesis. This Methylococcus capsulatus (strain ATCC 33009 / NCIMB 11132 / Bath) protein is GTPase Der.